Here is a 489-residue protein sequence, read N- to C-terminus: Probable transporter MCH1 (489 aa).

The next 3 helical transmembrane spans lie at 30 to 50 (IAYI…LISL), 68 to 88 (MIVT…GIIA), and 92 to 112 (GPIT…AYLA). N123 carries N-linked (GlcNAc...) asparagine glycosylation. 8 helical membrane passes run 132-152 (TLVC…SALI), 163-183 (LLSI…GSQF), 202-222 (VFKA…IATS), 279-299 (VLYI…MFIA), 307-327 (VLAG…YALT), 351-371 (WILL…YMLS), 388-408 (FYIG…YPTI), and 421-441 (AYGT…LIYA). N-linked (GlcNAc...) asparagine glycosylation is present at N450. Residues 462-482 (ETTALEFCAAILLTVVVTVLW) form a helical membrane-spanning segment.

It belongs to the major facilitator superfamily.

The protein localises to the vacuole membrane. Functionally, probable transporter. This Candida glabrata (strain ATCC 2001 / BCRC 20586 / JCM 3761 / NBRC 0622 / NRRL Y-65 / CBS 138) (Yeast) protein is Probable transporter MCH1 (MCH1).